The primary structure comprises 72 residues: Large ribosomal subunit protein bL28 (72 aa).

The protein belongs to the bacterial ribosomal protein bL28 family.

The polypeptide is Large ribosomal subunit protein bL28 (Pelodictyon phaeoclathratiforme (strain DSM 5477 / BU-1)).